Reading from the N-terminus, the 394-residue chain is DNA replication and repair protein RecF (394 aa).

Position 30 to 37 (30 to 37) interacts with ATP; it reads GRNGFGKT.

The protein belongs to the RecF family.

It is found in the cytoplasm. The RecF protein is involved in DNA metabolism; it is required for DNA replication and normal SOS inducibility. RecF binds preferentially to single-stranded, linear DNA. It also seems to bind ATP. The polypeptide is DNA replication and repair protein RecF (Corynebacterium glutamicum (strain R)).